A 60-amino-acid polypeptide reads, in one-letter code: MTRGNQRDLARQKNQKKQADLTKGKRTDNLTVEQRKARDAELMREKQKKKEEAAAAGTSK.

Residues 1-53 (MTRGNQRDLARQKNQKKQADLTKGKRTDNLTVEQRKARDAELMREKQKKKEEA) show a composition bias toward basic and acidic residues. A disordered region spans residues 1–60 (MTRGNQRDLARQKNQKKQADLTKGKRTDNLTVEQRKARDAELMREKQKKKEEAAAAGTSK).

This sequence belongs to the SERF family.

The polypeptide is Putative SERF-like protein (Drosophila melanogaster (Fruit fly)).